The following is an 88-amino-acid chain: Small ribosomal subunit protein uS17 (88 aa).

This sequence belongs to the universal ribosomal protein uS17 family. In terms of assembly, part of the 30S ribosomal subunit.

Functionally, one of the primary rRNA binding proteins, it binds specifically to the 5'-end of 16S ribosomal RNA. This Pseudomonas fluorescens (strain SBW25) protein is Small ribosomal subunit protein uS17.